The primary structure comprises 130 residues: Small ribosomal subunit protein uS9 (130 aa).

Belongs to the universal ribosomal protein uS9 family.

This chain is Small ribosomal subunit protein uS9, found in Methylibium petroleiphilum (strain ATCC BAA-1232 / LMG 22953 / PM1).